Consider the following 854-residue polypeptide: Protein translocase subunit SecA (854 aa).

Residues Q89, G107–T111, and D501 each bind ATP.

The protein belongs to the SecA family. In terms of assembly, monomer and homodimer. Part of the essential Sec protein translocation apparatus which comprises SecA, SecYEG and auxiliary proteins SecDF-YajC and YidC.

It is found in the cell inner membrane. The protein localises to the cytoplasm. It catalyses the reaction ATP + H2O + cellular proteinSide 1 = ADP + phosphate + cellular proteinSide 2.. In terms of biological role, part of the Sec protein translocase complex. Interacts with the SecYEG preprotein conducting channel. Has a central role in coupling the hydrolysis of ATP to the transfer of proteins into and across the cell membrane, serving both as a receptor for the preprotein-SecB complex and as an ATP-driven molecular motor driving the stepwise translocation of polypeptide chains across the membrane. The chain is Protein translocase subunit SecA from Pelagibacter ubique (strain HTCC1062).